The primary structure comprises 329 residues: Adenylate isopentenyltransferase (329 aa).

Residues 37–44 (GATGTGKS), Lys63, Thr74, 129–131 (SNS), 220–222 (KAI), and Lys313 contribute to the ATP site.

The protein belongs to the IPP transferase family. Mg(2+) serves as cofactor. Expressed in roots, stems, leaves and cones.

The catalysed reaction is dimethylallyl diphosphate + AMP = N(6)-(dimethylallyl)adenosine 5'-phosphate + diphosphate. It catalyses the reaction dimethylallyl diphosphate + ADP = N(6)-(dimethylallyl)adenosine 5'-diphosphate + diphosphate. The enzyme catalyses dimethylallyl diphosphate + ATP = N(6)-(dimethylallyl)adenosine 5'-triphosphate + diphosphate. In terms of biological role, involved in cytokinin biosynthesis. Catalyzes the transfer of an isopentenyl group from dimethylallyl diphosphate (DMAPP) to ATP, ADP and AMP. GMP, IMP, CMP or UMP are not used as substrates. The protein is Adenylate isopentenyltransferase of Humulus lupulus (European hop).